Consider the following 253-residue polypeptide: 1-(5-phosphoribosyl)-5-[(5-phosphoribosylamino)methylideneamino] imidazole-4-carboxamide isomerase (253 aa).

Aspartate 19 (proton acceptor) is an active-site residue. The Proton donor role is filled by aspartate 141.

It belongs to the HisA/HisF family.

The protein resides in the cytoplasm. The enzyme catalyses 1-(5-phospho-beta-D-ribosyl)-5-[(5-phospho-beta-D-ribosylamino)methylideneamino]imidazole-4-carboxamide = 5-[(5-phospho-1-deoxy-D-ribulos-1-ylimino)methylamino]-1-(5-phospho-beta-D-ribosyl)imidazole-4-carboxamide. It functions in the pathway amino-acid biosynthesis; L-histidine biosynthesis; L-histidine from 5-phospho-alpha-D-ribose 1-diphosphate: step 4/9. The protein is 1-(5-phosphoribosyl)-5-[(5-phosphoribosylamino)methylideneamino] imidazole-4-carboxamide isomerase of Rhodopirellula baltica (strain DSM 10527 / NCIMB 13988 / SH1).